The primary structure comprises 167 residues: Phosphopantetheine adenylyltransferase (167 aa).

Substrate is bound at residue Thr-10. ATP is bound by residues 10 to 11 (TF) and His-18. Residues Lys-42, Leu-75, and Arg-89 each coordinate substrate. ATP is bound by residues 90–92 (GVR), Glu-100, and 125–131 (YTYVASS).

Belongs to the bacterial CoaD family. In terms of assembly, homohexamer. Mg(2+) serves as cofactor.

Its subcellular location is the cytoplasm. The enzyme catalyses (R)-4'-phosphopantetheine + ATP + H(+) = 3'-dephospho-CoA + diphosphate. It participates in cofactor biosynthesis; coenzyme A biosynthesis; CoA from (R)-pantothenate: step 4/5. Reversibly transfers an adenylyl group from ATP to 4'-phosphopantetheine, yielding dephospho-CoA (dPCoA) and pyrophosphate. The chain is Phosphopantetheine adenylyltransferase from Chlorobium phaeobacteroides (strain DSM 266 / SMG 266 / 2430).